The sequence spans 218 residues: Mitochondrial fission factor (218 aa).

The Cytoplasmic segment spans residues 1 to 198 (MAEISRIQYE…ENKERAKREM (198 aa)). Thr-89 is modified (phosphothreonine). Phosphoserine occurs at positions 129, 131, 146, and 171. Residues 167–198 (VDAASLRRQIIKLNRRLQLLEEENKERAKREM) are a coiled coil. The helical; Anchor for type IV membrane protein transmembrane segment at 199-216 (VMYSITVAFWLLNSWLWF) threads the bilayer. The Mitochondrial intermembrane portion of the chain corresponds to 217–218 (RR).

It belongs to the Tango11 family. Homodimer. Interacts with DNM1L. Interacts with C11orf65/MFI; the interaction inhibits MFF interaction with DNM1L.

Its subcellular location is the mitochondrion outer membrane. It localises to the peroxisome. The protein localises to the cytoplasmic vesicle. The protein resides in the secretory vesicle. It is found in the synaptic vesicle. Plays a role in mitochondrial and peroxisomal fission. Promotes the recruitment and association of the fission mediator dynamin-related protein 1 (DNM1L) to the mitochondrial surface. May be involved in regulation of synaptic vesicle membrane dynamics by recruitment of DNM1L to clathrin-containing vesicles. The chain is Mitochondrial fission factor (Mff) from Rattus norvegicus (Rat).